The chain runs to 323 residues: tRNA U34 carboxymethyltransferase (323 aa).

Carboxy-S-adenosyl-L-methionine-binding positions include Lys-91, Trp-105, Lys-110, Gly-130, 152 to 154 (DPT), 181 to 182 (IE), Met-196, Tyr-200, and Arg-315.

It belongs to the class I-like SAM-binding methyltransferase superfamily. CmoB family. As to quaternary structure, homotetramer.

It carries out the reaction carboxy-S-adenosyl-L-methionine + 5-hydroxyuridine(34) in tRNA = 5-carboxymethoxyuridine(34) in tRNA + S-adenosyl-L-homocysteine + H(+). Functionally, catalyzes carboxymethyl transfer from carboxy-S-adenosyl-L-methionine (Cx-SAM) to 5-hydroxyuridine (ho5U) to form 5-carboxymethoxyuridine (cmo5U) at position 34 in tRNAs. This chain is tRNA U34 carboxymethyltransferase, found in Escherichia coli (strain SE11).